A 214-amino-acid chain; its full sequence is Phosphoribosylglycinamide formyltransferase (214 aa).

12 to 14 (GSN) lines the N(1)-(5-phospho-beta-D-ribosyl)glycinamide pocket. Residues 105–108 (LLIL) and asparagine 123 each bind (6R)-10-formyltetrahydrofolate. The active-site Proton donor is histidine 125. A (6R)-10-formyltetrahydrofolate-binding site is contributed by aspartate 167. Glutamate 197 serves as a coordination point for N(1)-(5-phospho-beta-D-ribosyl)glycinamide.

It belongs to the GART family.

The enzyme catalyses N(1)-(5-phospho-beta-D-ribosyl)glycinamide + (6R)-10-formyltetrahydrofolate = N(2)-formyl-N(1)-(5-phospho-beta-D-ribosyl)glycinamide + (6S)-5,6,7,8-tetrahydrofolate + H(+). Its pathway is purine metabolism; IMP biosynthesis via de novo pathway; N(2)-formyl-N(1)-(5-phospho-D-ribosyl)glycinamide from N(1)-(5-phospho-D-ribosyl)glycinamide (10-formyl THF route): step 1/1. The protein is Phosphoribosylglycinamide formyltransferase of Saccharomyces cerevisiae (strain ATCC 204508 / S288c) (Baker's yeast).